Here is a 534-residue protein sequence, read N- to C-terminus: SWI/SNF complex component SNF12 homolog (534 aa).

A compositionally biased stretch (polar residues) spans 1-12 (MSGNNNNPQKPQ). 2 disordered regions span residues 1–33 (MSGNNNNPQKPQGSAPLPFGNPGMASASVPGNQ) and 78–132 (MTMN…SPMR). The span at 94-105 (PSSPSLTTPGSL) shows a compositional bias: low complexity. Residues 314 to 391 (YVPEKFKLST…SQKISHHLSP (78 aa)) form the SWIB/MDM2 domain.

This sequence belongs to the SMARCD family. Part of a SWI-SNF complex.

The protein localises to the nucleus. Its function is as follows. Involved in transcriptional activation and repression of select genes by chromatin remodeling (alteration of DNA-nucleosome topology). The sequence is that of SWI/SNF complex component SNF12 homolog from Arabidopsis thaliana (Mouse-ear cress).